Reading from the N-terminus, the 161-residue chain is SsrA-binding protein (161 aa).

The protein belongs to the SmpB family.

The protein resides in the cytoplasm. Functionally, required for rescue of stalled ribosomes mediated by trans-translation. Binds to transfer-messenger RNA (tmRNA), required for stable association of tmRNA with ribosomes. tmRNA and SmpB together mimic tRNA shape, replacing the anticodon stem-loop with SmpB. tmRNA is encoded by the ssrA gene; the 2 termini fold to resemble tRNA(Ala) and it encodes a 'tag peptide', a short internal open reading frame. During trans-translation Ala-aminoacylated tmRNA acts like a tRNA, entering the A-site of stalled ribosomes, displacing the stalled mRNA. The ribosome then switches to translate the ORF on the tmRNA; the nascent peptide is terminated with the 'tag peptide' encoded by the tmRNA and targeted for degradation. The ribosome is freed to recommence translation, which seems to be the essential function of trans-translation. The chain is SsrA-binding protein from Vibrio vulnificus (strain YJ016).